Consider the following 447-residue polypeptide: Chromosomal replication initiator protein DnaA (447 aa).

Positions 1–74 (MENIEELWSA…MLLEVTGSEL (74 aa)) are domain I, interacts with DnaA modulators. The segment at 74–108 (LNTKFIIPDSLEEIEEQKPMPKPKQSTDTGDSPKS) is domain II. The interval 85–107 (EEIEEQKPMPKPKQSTDTGDSPK) is disordered. The span at 97 to 107 (KQSTDTGDSPK) shows a compositional bias: polar residues. The domain III, AAA+ region stretch occupies residues 109–325 (MLNSKYTFDT…GALIRVVAYS (217 aa)). 4 residues coordinate ATP: Gly-153, Gly-155, Lys-156, and Thr-157. A domain IV, binds dsDNA region spans residues 326 to 447 (SLVNQDIDAS…EELKEKLKSI (122 aa)).

Belongs to the DnaA family. Oligomerizes as a right-handed, spiral filament on DNA at oriC.

It is found in the cytoplasm. Functionally, plays an essential role in the initiation and regulation of chromosomal replication. ATP-DnaA binds to the origin of replication (oriC) to initiate formation of the DNA replication initiation complex once per cell cycle. Binds the DnaA box (a 9 base pair repeat at the origin) and separates the double-stranded (ds)DNA. Forms a right-handed helical filament on oriC DNA; dsDNA binds to the exterior of the filament while single-stranded (ss)DNA is stabiized in the filament's interior. The ATP-DnaA-oriC complex binds and stabilizes one strand of the AT-rich DNA unwinding element (DUE), permitting loading of DNA polymerase. After initiation quickly degrades to an ADP-DnaA complex that is not apt for DNA replication. Binds acidic phospholipids. The sequence is that of Chromosomal replication initiator protein DnaA from Oceanobacillus iheyensis (strain DSM 14371 / CIP 107618 / JCM 11309 / KCTC 3954 / HTE831).